The primary structure comprises 390 residues: DNA polymerase IV (390 aa).

The 182-residue stretch at 6–187 folds into the UmuC domain; that stretch reads VMHVDLDAFF…LDIAVMPGIG (182 aa). Mg(2+)-binding residues include Asp-10 and Asp-105. Residue Glu-106 is part of the active site.

This sequence belongs to the DNA polymerase type-Y family. Monomer. It depends on Mg(2+) as a cofactor.

It localises to the cytoplasm. The catalysed reaction is DNA(n) + a 2'-deoxyribonucleoside 5'-triphosphate = DNA(n+1) + diphosphate. Functionally, poorly processive, error-prone DNA polymerase involved in untargeted mutagenesis. Copies undamaged DNA at stalled replication forks, which arise in vivo from mismatched or misaligned primer ends. These misaligned primers can be extended by PolIV. Exhibits no 3'-5' exonuclease (proofreading) activity. May be involved in translesional synthesis, in conjunction with the beta clamp from PolIII. This Dehalococcoides mccartyi (strain ATCC BAA-2100 / JCM 16839 / KCTC 5957 / BAV1) protein is DNA polymerase IV.